Consider the following 240-residue polypeptide: tRNA pseudouridine synthase A (240 aa).

Asp-52 serves as the catalytic Nucleophile. Tyr-110 serves as a coordination point for substrate.

It belongs to the tRNA pseudouridine synthase TruA family. As to quaternary structure, homodimer.

The enzyme catalyses uridine(38/39/40) in tRNA = pseudouridine(38/39/40) in tRNA. Formation of pseudouridine at positions 38, 39 and 40 in the anticodon stem and loop of transfer RNAs. The sequence is that of tRNA pseudouridine synthase A from Solibacter usitatus (strain Ellin6076).